Consider the following 459-residue polypeptide: Interleukin-7 receptor subunit alpha (459 aa).

The first 20 residues, M1–G20, serve as a signal peptide directing secretion. Over E21–T241 the chain is Extracellular. A disulfide bond links C42 and C57. N-linked (GlcNAc...) asparagine glycans are attached at residues N49 and N65. 2 cysteine pairs are disulfide-bonded: C74-C82 and C108-C118. Residues A131–I231 enclose the Fibronectin type-III domain. N182 carries an N-linked (GlcNAc...) asparagine glycan. Residues W217–S221 carry the WSXWS motif motif. A helical transmembrane segment spans residues L242 to V262. Over L263–R459 the chain is Cytoplasmic. A Box 1 motif motif is present at residues I272–K280. T282 carries the post-translational modification Phosphothreonine; by PKC. The tract at residues T327–T357 is disordered. Residues Q345–T357 are compositionally biased toward polar residues.

It belongs to the type I cytokine receptor family. Type 4 subfamily. As to quaternary structure, the IL7 receptor is a heterodimer of IL7R and IL2RG. The TSLP receptor is a heterodimer of CRLF2 and IL7R. Interacts with CD53. In terms of processing, N-glycosylated IL-7Ralpha binds IL7 300-fold more tightly than the unglycosylated form. Ubiquitinated by MARCHF8; leading to lysosomal degradation.

Its subcellular location is the cell membrane. Its function is as follows. Receptor for interleukin-7. Also acts as a receptor for thymic stromal lymphopoietin (TSLP). This Callithrix jacchus (White-tufted-ear marmoset) protein is Interleukin-7 receptor subunit alpha (IL7R).